We begin with the raw amino-acid sequence, 419 residues long: G protein-activated inward rectifier potassium channel 4 (419 aa).

Residues 1–86 (MAGDSRNAMN…LFTTLVDLKW (86 aa)) are Cytoplasmic-facing. Position 5 is a phosphoserine (serine 5). Residues 87–111 (RFNLLVFTMVYTITWLFFGFIWWLI) form a helical membrane-spanning segment. The Extracellular portion of the chain corresponds to 112-135 (AYVRGDLDHVGDQEWIPCVENLSG). Residues 136-147 (FVSAFLFSIETE) constitute an intramembrane region (helical; Pore-forming). Positions 148 to 154 (TTIGYGF) form an intramembrane region, pore-forming. The short motif at 149 to 154 (TIGYGF) is the Selectivity filter element. At 155-163 (RVITEKCPE) the chain is on the extracellular side. Residues 164-185 (GIILLLVQAILGSIVNAFMVGC) traverse the membrane as a helical segment. The Cytoplasmic portion of the chain corresponds to 186-419 (MFVKISQPKK…SVSRATRGSM (234 aa)). Low complexity predominate over residues 380–390 (LPSPPLLGGCA). Positions 380-419 (LPSPPLLGGCAEAEKEAEAEHDEEEEPNGLSVSRATRGSM) are disordered. Residues 409–419 (LSVSRATRGSM) are compositionally biased toward polar residues.

The protein belongs to the inward rectifier-type potassium channel (TC 1.A.2.1) family. KCNJ5 subfamily. In terms of assembly, associates with KCNJ3/GIRK1 or KCNJ6/GRIK2 to form a G-protein-activated heteromultimer pore-forming unit. The resulting inward current is much larger. As to expression, most abundant in heart tissue where it is found predominantly in atria. Also found in brain, kidney, liver, spleen, lung and thymus.

It is found in the membrane. The catalysed reaction is K(+)(in) = K(+)(out). With respect to regulation, heteromultimer composed of KCNJ3/GIRK1 and KCNJ5/GIRK4 is activated by phosphatidylinositol 4,5 biphosphate (PtdIns(4,5)P2). Its function is as follows. Inward rectifier potassium channels are characterized by a greater tendency to allow potassium to flow into the cell rather than out of it. Their voltage dependence is regulated by the concentration of extracellular potassium; as external potassium is raised, the voltage range of the channel opening shifts to more positive voltages. The inward rectification is mainly due to the blockage of outward current by internal magnesium. Can be blocked by external barium. This potassium channel is controlled by G proteins. This is G protein-activated inward rectifier potassium channel 4 (Kcnj5) from Rattus norvegicus (Rat).